Here is a 581-residue protein sequence, read N- to C-terminus: Pyridine nucleotide-disulfide oxidoreductase domain-containing protein 2 (581 aa).

38 to 71 (VVIGAGHNGLVAAAYLQRLGVNTAVFERRHVIGG) contributes to the FAD binding site.

The protein belongs to the carotenoid/retinoid oxidoreductase family. Interacts with COX5B; this interaction may contribute to localize PYROXD2 to the inner face of the inner mitochondrial membrane.

The protein resides in the mitochondrion matrix. Its function is as follows. Probable oxidoreductase that may play a role as regulator of mitochondrial function. This Rattus norvegicus (Rat) protein is Pyridine nucleotide-disulfide oxidoreductase domain-containing protein 2.